A 349-amino-acid polypeptide reads, in one-letter code: Protein Wnt-7b (349 aa).

An N-terminal signal peptide occupies residues 1 to 24 (MHRNFRKWIFYVFLCFGVLYVKLG). Cystine bridges form between Cys-73-Cys-84, Cys-123-Cys-131, Cys-133-Cys-152, Cys-200-Cys-214, and Cys-202-Cys-209. 2 N-linked (GlcNAc...) asparagine glycosylation sites follow: Asn-83 and Asn-127. Ser-206 carries the O-palmitoleoyl serine; by PORCN lipid modification. The disordered linker stretch occupies residues 238–266 (VEVVRASRLRQPTFLRIKQLRSYQKPMET). 6 disulfides stabilise this stretch: Cys-278/Cys-309, Cys-294/Cys-304, Cys-308/Cys-348, Cys-324/Cys-339, Cys-326/Cys-336, and Cys-331/Cys-332. Residue Asn-295 is glycosylated (N-linked (GlcNAc...) asparagine).

It belongs to the Wnt family. Forms a soluble 1:1 complex with AFM; this prevents oligomerization and is required for prolonged biological activity. The complex with AFM may represent the physiological form in body fluids. Interacts with FZD1 and FZD10. Interacts with FZD4 (in vitro). Interacts with PORCN. Interacts with glypican GPC3. Interacts (via intrinsically disordered linker region) with RECK; interaction with RECK confers ligand selectivity for Wnt7 in brain endothelial cells and allows these cells to selectively respond to Wnt7. Post-translationally, palmitoleoylation is required for efficient binding to frizzled receptors. Depalmitoleoylation leads to Wnt signaling pathway inhibition. As to expression, moderately expressed in fetal brain, weakly expressed in fetal lung and kidney, and faintly expressed in adult brain, lung and prostate.

It localises to the secreted. Its subcellular location is the extracellular space. The protein resides in the extracellular matrix. In terms of biological role, ligand for members of the frizzled family of seven transmembrane receptors that functions in the canonical Wnt/beta-catenin signaling pathway. Required for normal fusion of the chorion and the allantois during placenta development. Required for central nervous system (CNS) angiogenesis and blood-brain barrier regulation. This Homo sapiens (Human) protein is Protein Wnt-7b (WNT7B).